Consider the following 887-residue polypeptide: Integrator complex subunit 6 (887 aa).

One can recognise a VWFA domain in the interval 3 to 227; sequence ILLFLIDTSA…QCLESLVQKV (225 aa). Residues 626 to 633 carry the Inhibitory loop motif; the sequence is MMIDEADE. A Phosphoserine modification is found at Ser-804.

This sequence belongs to the Integrator subunit 6 family. In terms of assembly, component of the Integrator complex, composed of core subunits INTS1, INTS2, INTS3, INTS4, INTS5, INTS6, INTS7, INTS8, INTS9/RC74, INTS10, INTS11/CPSF3L, INTS12, INTS13, INTS14 and INTS15. The core complex associates with protein phosphatase 2A subunits PPP2CA and PPP2R1A, to form the Integrator-PP2A (INTAC) complex. Widely expressed. Expressed in heart, brain, placenta, lung, liver, skeletal muscle, kidney and pancreas.

The protein localises to the nucleus. It localises to the chromosome. In terms of biological role, component of the integrator complex, a multiprotein complex that terminates RNA polymerase II (Pol II) transcription in the promoter-proximal region of genes. The integrator complex provides a quality checkpoint during transcription elongation by driving premature transcription termination of transcripts that are unfavorably configured for transcriptional elongation: the complex terminates transcription by (1) catalyzing dephosphorylation of the C-terminal domain (CTD) of Pol II subunit POLR2A and SUPT5H/SPT5, (2) degrading the exiting nascent RNA transcript via endonuclease activity and (3) promoting the release of Pol II from bound DNA. The integrator complex is also involved in terminating the synthesis of non-coding Pol II transcripts, such as enhancer RNAs (eRNAs), small nuclear RNAs (snRNAs), telomerase RNAs and long non-coding RNAs (lncRNAs). Within the integrator complex, INTS6 acts as a molecular adapter that promotes assembly of protein phosphatase 2A (PP2A) subunits to the integrator core complex, promoting recruitment of PP2A to transcription pause-release checkpoint. Mediates recruitment of cytoplasmic dynein to the nuclear envelope, probably as component of the integrator complex. May have a tumor suppressor role; an ectopic expression suppressing tumor cell growth. In Homo sapiens (Human), this protein is Integrator complex subunit 6.